The sequence spans 208 residues: Large ribosomal subunit protein uL4 (208 aa).

The segment at 58-77 is disordered; it reads RGGGRKPWRQKGTGRARQGS. The segment covering 60-71 has biased composition (basic residues); that stretch reads GGRKPWRQKGTG.

Belongs to the universal ribosomal protein uL4 family. As to quaternary structure, part of the 50S ribosomal subunit.

Its function is as follows. One of the primary rRNA binding proteins, this protein initially binds near the 5'-end of the 23S rRNA. It is important during the early stages of 50S assembly. It makes multiple contacts with different domains of the 23S rRNA in the assembled 50S subunit and ribosome. Forms part of the polypeptide exit tunnel. The chain is Large ribosomal subunit protein uL4 from Caldicellulosiruptor bescii (strain ATCC BAA-1888 / DSM 6725 / KCTC 15123 / Z-1320) (Anaerocellum thermophilum).